Reading from the N-terminus, the 328-residue chain is tRNA uridine(34) hydroxylase (328 aa).

In terms of domain architecture, Rhodanese spans 130-224 (LDEDTVVLDT…YGKDPEVQGE (95 aa)). The Cysteine persulfide intermediate role is filled by Cys-184.

It belongs to the TrhO family.

The enzyme catalyses uridine(34) in tRNA + AH2 + O2 = 5-hydroxyuridine(34) in tRNA + A + H2O. Catalyzes oxygen-dependent 5-hydroxyuridine (ho5U) modification at position 34 in tRNAs. In Streptococcus agalactiae serotype Ia (strain ATCC 27591 / A909 / CDC SS700), this protein is tRNA uridine(34) hydroxylase.